Reading from the N-terminus, the 317-residue chain is Melanocyte-stimulating hormone receptor (317 aa).

Residues M1–E37 lie on the Extracellular side of the membrane. N15 and N29 each carry an N-linked (GlcNAc...) asparagine glycan. Residues V38 to I63 traverse the membrane as a helical segment. Topologically, residues A64–P72 are cytoplasmic. The helical transmembrane segment at M73–L93 threads the bilayer. Residues E94–D118 lie on the Extracellular side of the membrane. A helical membrane pass occupies residues V119–V140. The Cytoplasmic segment spans residues D141–R163. A helical transmembrane segment spans residues A164–Y183. The Extracellular portion of the chain corresponds to D184–C191. The helical transmembrane segment at L192 to L211 threads the bilayer. The Cytoplasmic segment spans residues A212–A240. A helical membrane pass occupies residues A241–L266. Topologically, residues C267 to N279 are extracellular. A helical transmembrane segment spans residues F280–F300. Residues R301–W317 are Cytoplasmic-facing. C315 carries S-palmitoyl cysteine lipidation.

The protein belongs to the G-protein coupled receptor 1 family. As to quaternary structure, interacts with MGRN1, but does not undergo MGRN1-mediated ubiquitination; this interaction competes with GNAS-binding and thus inhibits agonist-induced cAMP production. Interacts with OPN3; the interaction results in a decrease in MC1R-mediated cAMP signaling and ultimately a decrease in melanin production in melanocytes.

Its subcellular location is the cell membrane. Receptor for MSH (alpha, beta and gamma) and ACTH. The activity of this receptor is mediated by G proteins which activate adenylate cyclase. Mediates melanogenesis, the production of eumelanin (black/brown) and phaeomelanin (red/yellow), via regulation of cAMP signaling in melanocytes. This chain is Melanocyte-stimulating hormone receptor (MC1R), found in Panthera onca (Jaguar).